Reading from the N-terminus, the 118-residue chain is SPbeta prophage-derived uncharacterized protein YomS (118 aa).

The chain is SPbeta prophage-derived uncharacterized protein YomS (yomS) from Bacillus subtilis (strain 168).